A 227-amino-acid chain; its full sequence is ATP phosphoribosyltransferase (227 aa).

It belongs to the ATP phosphoribosyltransferase family. Short subfamily. In terms of assembly, heteromultimer composed of HisG and HisZ subunits.

It is found in the cytoplasm. It catalyses the reaction 1-(5-phospho-beta-D-ribosyl)-ATP + diphosphate = 5-phospho-alpha-D-ribose 1-diphosphate + ATP. It participates in amino-acid biosynthesis; L-histidine biosynthesis; L-histidine from 5-phospho-alpha-D-ribose 1-diphosphate: step 1/9. Functionally, catalyzes the condensation of ATP and 5-phosphoribose 1-diphosphate to form N'-(5'-phosphoribosyl)-ATP (PR-ATP). Has a crucial role in the pathway because the rate of histidine biosynthesis seems to be controlled primarily by regulation of HisG enzymatic activity. The polypeptide is ATP phosphoribosyltransferase (Rhodospirillum rubrum (strain ATCC 11170 / ATH 1.1.1 / DSM 467 / LMG 4362 / NCIMB 8255 / S1)).